The primary structure comprises 365 residues: Synapse-associated protein 1 (365 aa).

Residues 1–65 form a disordered region; the sequence is MFGGLSSWLG…QPPTEDPQFL (65 aa). Residues 52–62 are compositionally biased toward low complexity; that stretch reads EQQQQPPTEDP. The 53-residue stretch at 172 to 224 folds into the BSD domain; that stretch reads VQFNFDFDQMYPVALVMLQEDELLSKMRFALVPKLVKEEVFWRNYFYRISLIK. The interval 237–259 is disordered; that stretch reads QASGKEEKSSNRDDNLPLTEAVR. Residues 240–251 show a composition bias toward basic and acidic residues; it reads GKEEKSSNRDDN. Thr262 is modified (phosphothreonine). Ser283, Ser298, and Ser327 each carry phosphoserine. Residues 344-365 are disordered; sequence VAESEKRDENWDKEIEKMLQES. Over residues 346-365 the composition is skewed to basic and acidic residues; it reads ESEKRDENWDKEIEKMLQES.

Interacts (via phosphorylated form and BSD domain) with AKT1; this interaction is enhanced in a mTORC2-mediated manner in response to epidermal growth factor (EGF) stimulation and activates AKT1. Post-translationally, phosphorylated. Phosphorylation increases in a mTORC2-mediated manner in response to epidermal growth factor (EGF) stimulation. In terms of tissue distribution, expressed in the liver, kidney, skeletal muscle and in white and brown adipose tissues. Expressed in the cortex, cerebellum, thalamus, hippocampus, braistem, olfactory bulb, spinal cord and striatum of the brain. Expressed in most neuropil regions containing glutamatergic synaptic terminals. Expressed in the CA1, CA2 and CA3 perikarya of the hippocampus. Expressed in neurons and Purkinje cells (at the protein level).

The protein resides in the cytoplasm. Its subcellular location is the perinuclear region. It localises to the golgi apparatus. It is found in the perikaryon. The protein localises to the cell projection. The protein resides in the axon. Its subcellular location is the dendrite. It localises to the growth cone. It is found in the presynaptic cell membrane. The protein localises to the postsynaptic cell membrane. The protein resides in the membrane. Functionally, plays a role in adipocyte differentiation by promoting mTORC2-mediated phosphorylation of AKT1 at 'Ser-473' after growth factor stimulation. The chain is Synapse-associated protein 1 from Mus musculus (Mouse).